The chain runs to 315 residues: MGKRAKITVVGAGHVGEHVAMFCAIKELGDVVLIDIVEDMPQGKALDMFEATPLEGWDSRIVGTNDYADTADSDIVVITAGSPRKPGMSRDDLLEINAKIIKAVTEQVAKYSPNAVIIVVTNPLDAMTQLAWNVSGFPKNRVLGQAGNLDSARFRAFIAMELGVSVKEISAMVLGGHGDDMVPLPRFTTVSGIPITELIPPDRIEALVQRTRVGGGEIVKLLKTGSAYYAPALATVEMVEAILKDQKRIQPCAALCEGEYGINGVYCGVPCLLGANGVEKIIELKLTDDELKALQASAGRVKGLIDKLTEWGYIK.

Residues 11–16 (GAGHVG) and D35 each bind NAD(+). The substrate site is built by R84 and R90. NAD(+)-binding positions include N97 and 120–122 (VTN). Substrate-binding residues include N122 and R153. Residue H177 is the Proton acceptor of the active site.

Belongs to the LDH/MDH superfamily. MDH type 3 family.

The enzyme catalyses (S)-malate + NAD(+) = oxaloacetate + NADH + H(+). Catalyzes the reversible oxidation of malate to oxaloacetate. The polypeptide is Malate dehydrogenase (Thermosulfidibacter takaii (strain DSM 17441 / JCM 13301 / NBRC 103674 / ABI70S6)).